The following is a 242-amino-acid chain: 1-(5-phosphoribosyl)-5-[(5-phosphoribosylamino)methylideneamino] imidazole-4-carboxamide isomerase (242 aa).

The active-site Proton acceptor is the Asp10. The active-site Proton donor is the Asp132.

Belongs to the HisA/HisF family.

The protein localises to the cytoplasm. The catalysed reaction is 1-(5-phospho-beta-D-ribosyl)-5-[(5-phospho-beta-D-ribosylamino)methylideneamino]imidazole-4-carboxamide = 5-[(5-phospho-1-deoxy-D-ribulos-1-ylimino)methylamino]-1-(5-phospho-beta-D-ribosyl)imidazole-4-carboxamide. It participates in amino-acid biosynthesis; L-histidine biosynthesis; L-histidine from 5-phospho-alpha-D-ribose 1-diphosphate: step 4/9. The polypeptide is 1-(5-phosphoribosyl)-5-[(5-phosphoribosylamino)methylideneamino] imidazole-4-carboxamide isomerase (Methanothrix thermoacetophila (strain DSM 6194 / JCM 14653 / NBRC 101360 / PT) (Methanosaeta thermophila)).